The following is a 402-amino-acid chain: Type II NADH:quinone oxidoreductase (402 aa).

FAD is bound by residues 12-16 (GAGYA), 39-40 (NK), and V83. E172 is an active-site residue. FAD is bound by residues D302, 319–320 (AQ), and K379.

The protein belongs to the NADH dehydrogenase family. FAD is required as a cofactor.

It localises to the cell membrane. The catalysed reaction is a quinone + NADH + H(+) = a quinol + NAD(+). Alternative, nonproton pumping NADH:quinone oxidoreductase that delivers electrons to the respiratory chain by oxidation of NADH and reduction of quinones, and contributes to the regeneration of NAD(+). The protein is Type II NADH:quinone oxidoreductase of Staphylococcus aureus (strain MSSA476).